Here is a 459-residue protein sequence, read N- to C-terminus: 23S rRNA (uracil-C(5))-methyltransferase RlmCD (459 aa).

In terms of domain architecture, TRAM spans 6 to 64 (PVEKNEYYDVTFEDLTHEGAGVAKVQGFPIFVPNALPEEKAQIKVTRVKKGFAFGRLIE). [4Fe-4S] cluster contacts are provided by Cys-77, Cys-83, Cys-86, and Cys-166. S-adenosyl-L-methionine-binding residues include Gln-290, Tyr-319, Glu-340, and Asp-388. Residue Cys-415 is the Nucleophile of the active site.

Belongs to the class I-like SAM-binding methyltransferase superfamily. RNA M5U methyltransferase family.

The enzyme catalyses uridine(747) in 23S rRNA + S-adenosyl-L-methionine = 5-methyluridine(747) in 23S rRNA + S-adenosyl-L-homocysteine + H(+). The catalysed reaction is uridine(1939) in 23S rRNA + S-adenosyl-L-methionine = 5-methyluridine(1939) in 23S rRNA + S-adenosyl-L-homocysteine + H(+). Functionally, catalyzes the formation of 5-methyl-uridine at positions 747 (m5U747) and 1939 (m5U1939) in 23S rRNA. This is 23S rRNA (uracil-C(5))-methyltransferase RlmCD (rlmCD) from Bacillus subtilis (strain 168).